A 140-amino-acid polypeptide reads, in one-letter code: ATP synthase epsilon chain (140 aa).

It belongs to the ATPase epsilon chain family. As to quaternary structure, F-type ATPases have 2 components, CF(1) - the catalytic core - and CF(0) - the membrane proton channel. CF(1) has five subunits: alpha(3), beta(3), gamma(1), delta(1), epsilon(1). CF(0) has three main subunits: a, b and c.

It localises to the cell inner membrane. In terms of biological role, produces ATP from ADP in the presence of a proton gradient across the membrane. The sequence is that of ATP synthase epsilon chain from Vibrio parahaemolyticus serotype O3:K6 (strain RIMD 2210633).